Consider the following 779-residue polypeptide: Pre-mRNA-splicing factor cef-1 (779 aa).

HTH myb-type domains follow at residues M1 to I56 and K57 to E106. DNA-binding regions (H-T-H motif) lie at residues W29–L52 and W80–L102. 4 disordered regions span residues L113–R192, E246–Q284, T424–P448, and W497–E525. Positions S127–T152 are enriched in basic and acidic residues. Residues E157–T204 are a coiled coil. 2 stretches are compositionally biased toward basic and acidic residues: residues E246 to K256 and R263 to P281. A coiled-coil region spans residues D653 to G772.

It belongs to the CEF1 family. As to quaternary structure, associated with the spliceosome.

The protein resides in the cytoplasm. Its subcellular location is the nucleus. Functionally, involved in pre-mRNA splicing and cell cycle control. This Neurospora crassa (strain ATCC 24698 / 74-OR23-1A / CBS 708.71 / DSM 1257 / FGSC 987) protein is Pre-mRNA-splicing factor cef-1 (cef-1).